Reading from the N-terminus, the 319-residue chain is Ribonucleoside-diphosphate reductase 2 subunit beta (319 aa).

Residues D67, E98, and H101 each coordinate Fe cation. Y105 is a catalytic residue. Fe cation is bound by residues E158, E192, and H195.

The protein belongs to the ribonucleoside diphosphate reductase small chain family. Tetramer of two alpha and two beta subunits. Fe cation is required as a cofactor.

It catalyses the reaction a 2'-deoxyribonucleoside 5'-diphosphate + [thioredoxin]-disulfide + H2O = a ribonucleoside 5'-diphosphate + [thioredoxin]-dithiol. Provides the precursors necessary for DNA synthesis. Catalyzes the biosynthesis of deoxyribonucleotides from the corresponding ribonucleotides. R2F contains the tyrosyl radical required for catalysis. In Salmonella typhimurium (strain LT2 / SGSC1412 / ATCC 700720), this protein is Ribonucleoside-diphosphate reductase 2 subunit beta (nrdF).